A 167-amino-acid polypeptide reads, in one-letter code: uncharacterized protein (167 aa).

This is an uncharacterized protein from Aquifex aeolicus (strain VF5).